Here is a 475-residue protein sequence, read N- to C-terminus: MSKKLHIKTWGCQMNEYDSSKMADLLDEYEGYTLTDNAEEADVLLLNTCSIREKAQEKVFHQLGRWKTLKDKKPELIIGVGGCVASQEGKAIKERAQCVDLIFGPQTLHRLPEMIDQIRAGKKAVIDVSFPEIEKFDRLPEPRADGPSAFVSIMEGCSKYCSFCVVPYTRGEEVSRPLDDIILEIAQLAEQGVREVNLLGQNVNAYRGATHDDEICTFAELLRYVAAIDGIDRLRFTTSHPIEFTQDIIDVYEDTPELVSFLHLPVQSGSDLILTQMKRGHMAIEYKSIIRRLRKARPDILISSDFIIGFPGESKQDFADTMKLIEDIQFDHSFSFIYSARPGTPAADLPDDVSLDEKKERLAILQDRITQQAMRYSRQMVGTVQRILVEGPSVKNPMELRGRTENSRVVNFEGMHKHIGKFVDVEIVDVYTNSLRGVFIRGEDEMDLRRDLRPSDITAKYKQTDDLGVSQFKPA.

The MTTase N-terminal domain maps to 3 to 120 (KKLHIKTWGC…LPEMIDQIRA (118 aa)). 6 residues coordinate [4Fe-4S] cluster: Cys12, Cys49, Cys83, Cys157, Cys161, and Cys164. Residues 143-375 (RADGPSAFVS…QDRITQQAMR (233 aa)) form the Radical SAM core domain. In terms of domain architecture, TRAM spans 378 to 441 (RQMVGTVQRI…TNSLRGVFIR (64 aa)).

Belongs to the methylthiotransferase family. MiaB subfamily. In terms of assembly, monomer. It depends on [4Fe-4S] cluster as a cofactor.

It is found in the cytoplasm. It catalyses the reaction N(6)-dimethylallyladenosine(37) in tRNA + (sulfur carrier)-SH + AH2 + 2 S-adenosyl-L-methionine = 2-methylsulfanyl-N(6)-dimethylallyladenosine(37) in tRNA + (sulfur carrier)-H + 5'-deoxyadenosine + L-methionine + A + S-adenosyl-L-homocysteine + 2 H(+). Catalyzes the methylthiolation of N6-(dimethylallyl)adenosine (i(6)A), leading to the formation of 2-methylthio-N6-(dimethylallyl)adenosine (ms(2)i(6)A) at position 37 in tRNAs that read codons beginning with uridine. The polypeptide is tRNA-2-methylthio-N(6)-dimethylallyladenosine synthase (Shewanella halifaxensis (strain HAW-EB4)).